A 552-amino-acid chain; its full sequence is Acyl-CoA-dependent acyltransferase MAC1 (552 aa).

It belongs to the trichothecene O-acetyltransferase family.

It participates in secondary metabolite biosynthesis. Acyl-CoA-dependent acyltransferase; part of the gene cluster that mediates the biosynthesis of mannosylerythritol lipids (MELs), surface-active substances that enhance the availability of water-insoluble substrates. Depending on the number of acetyl groups, mannosylerythritol lipids can be differentiated into MEL A (fully acetylated), MEL B and MEL C (monoacetylated at R-6 and R-4, respectively), and the fully deacetylated MEL D. The first step in the pathway is the generation of mannosylerythritol by the glycosyltransferase EMT1 which catalyzes the transfer of GDP-mannose to the C-4 atom of meso-erythritol. This reaction has to be stereospecific, since only mannosyl-D-erythritol is generated. The produced disaccharide is subsequently acylated with fatty acids of various lengths by the acyltransferases MAC1 and MAC2 at positions C-2 and C-3, repectively. The existence of MEL derivatives which carry an acetyl group at C-2 implies that at least MAC1 also accepts acetyl-CoA as a donor. The final step of MEL biosynthesis is the acetylation of the fully acylated mannosylerythritol lipids catalyzed by the acetyl-CoA-dependent acetyltransferase MAT1. MAT1 displays a relaxed regioselectivity and is able to transfer acetylgroups to both positions C-4 and C-6 of the mannosyl moiety. The protein is Acyl-CoA-dependent acyltransferase MAC1 of Pseudozyma antarctica (strain T-34) (Yeast).